The following is a 155-amino-acid chain: Ribosome maturation factor RimP (155 aa).

It belongs to the RimP family.

Its subcellular location is the cytoplasm. Its function is as follows. Required for maturation of 30S ribosomal subunits. In Parabacteroides distasonis (strain ATCC 8503 / DSM 20701 / CIP 104284 / JCM 5825 / NCTC 11152), this protein is Ribosome maturation factor RimP.